Here is a 341-residue protein sequence, read N- to C-terminus: S-adenosylmethionine:tRNA ribosyltransferase-isomerase (341 aa).

It belongs to the QueA family. In terms of assembly, monomer.

It is found in the cytoplasm. It carries out the reaction 7-aminomethyl-7-carbaguanosine(34) in tRNA + S-adenosyl-L-methionine = epoxyqueuosine(34) in tRNA + adenine + L-methionine + 2 H(+). It functions in the pathway tRNA modification; tRNA-queuosine biosynthesis. In terms of biological role, transfers and isomerizes the ribose moiety from AdoMet to the 7-aminomethyl group of 7-deazaguanine (preQ1-tRNA) to give epoxyqueuosine (oQ-tRNA). The chain is S-adenosylmethionine:tRNA ribosyltransferase-isomerase from Staphylococcus haemolyticus (strain JCSC1435).